Here is a 591-residue protein sequence, read N- to C-terminus: Protein enabled homolog (591 aa).

The WH1 domain maps to 1–111 (MSEQSICQAR…SAMMHALEVL (111 aa)). Over residues 115-136 (ETGPTLPRQNSQLPAQVQNGPS) the composition is skewed to polar residues. Residues 115-146 (ETGPTLPRQNSQLPAQVQNGPSQEELEIQRRQ) are disordered. S125 is modified (phosphoserine). The stretch at 135–265 (PSQEELEIQR…LEWERERRIS (131 aa)) forms a coiled coil. Tandem repeats lie at residues 156–160 (LERER), 161–165 (LERER), 166–170 (MERER), 171–175 (LERER), 176–180 (LERER), 181–185 (LERER), 186–190 (LEQEQ), 191–195 (LERER), and 196–200 (QERER). The interval 156-200 (LERERLERERMERERLERERLERERLERERLEQEQLERERQERER) is 9 X 5 AA tandem repeats of [LMQ]-E-[QR]-E-[QR]. A compositionally biased stretch (basic and acidic residues) spans 221-264 (RLDRERQERQERERLERLERERQERERQEQLEREQLEWERERRI). The segment at 221-379 (RLDRERQERQ…PPLPASGFFL (159 aa)) is disordered. Phosphoserine; by PKA is present on S265. Positions 275 to 305 (TPLNSVLGDSSASEPGLQAASQPAETPSQQG) are enriched in polar residues. 2 stretches are compositionally biased toward pro residues: residues 311-323 (LAPP…PPGP) and 330-373 (LPPP…PPLP). The EVH2 block A stretch occupies residues 391-411 (GLAAAIAGAKLRKVSRMEDTS). Positions 391–588 (GLAAAIAGAK…DAIRQELSKS (198 aa)) are EVH2. The short motif at 400-403 (KLRK) is the KLKR element. The disordered stretch occupies residues 405 to 549 (SRMEDTSFPS…LSQPSANGVQ (145 aa)). A compositionally biased stretch (gly residues) spans 432-443 (RGNGPLPLGGSG). Residues 442–459 (SGLMEEMSALLARRRRIA) are EVH2 block B. I465 bears the Phosphothreonine mark. Residues E471 and E475 each carry the phosphoserine modification. Composition is skewed to polar residues over residues 479–491 (PVTS…STPE) and 499–509 (RTNTMNGSKSP). Phosphothreonine is present on T502. A phosphoserine mark is found at S506, S508, and S512. The span at 538–549 (TPLSQPSANGVQ) shows a compositional bias: polar residues. Residues 554–588 (DYDRLKQDILDEMRKELTKLKEELIDAIRQELSKS) are EVH2 block C. A coiled-coil region spans residues 557–587 (RLKQDILDEMRKELTKLKEELIDAIRQELSK).

This sequence belongs to the Ena/VASP family. Homotetramer. Interacts with APBB1IP, APBB1, PFN1 and ROBO4. Isoforms, containing the polyproline-rich regions with PPLP motifs, bind the WW domain of APBB1IP. Isoforms, containing the PPSY motif, bind, in vitro, to the WW2 and WW3 domains of NEDD4 and to the WW1 domain of YAP1. Binds the SH3 domain of BAIAP2-alpha but only after the autoinhibitory region of BAIAP2-alpha has been blocked by interaction with CDC42. Interacts, via the EVH1/WH1 domain, with the Pro-rich domains from VCL, ZYX and Listeria monocytogenes actA and with TES (via LIM domains). The TES LIM domain and the Pro-rich domains from VCL or ZYX compete for the same binding site. Interaction with ZYX is important for targeting ENAH to focal adhesions and enhances production of actin-rich structures at the apical surface of cells. Interacts, through the Pro-rich region, with the C-terminal SH3 domain of DNMPB. Binds GPHN. Interacts with FAT1 (via EVH1 domains). Heterotrimer with TES and ACTL7A. Interacts with PRPF40A. Post-translationally, NTN1-induced PKA phosphorylation on Ser-265 directly parallels the formation of filopodial protrusions. In terms of tissue distribution, expressed in myoepithelia of parotid, breast, bronchial glands and sweat glands. Expressed in colon-rectum muscolaris mucosae epithelium, pancreas acinar ductal epithelium, endometrium epithelium, prostate fibromuscolar stroma and placenta vascular media. Overexpressed in a majority of breast cancer cell lines and primary breast tumor lesions.

The protein resides in the cytoplasm. It localises to the cytoskeleton. It is found in the cell projection. The protein localises to the lamellipodium. Its subcellular location is the filopodium. The protein resides in the synapse. It localises to the cell junction. It is found in the focal adhesion. Its function is as follows. Ena/VASP proteins are actin-associated proteins involved in a range of processes dependent on cytoskeleton remodeling and cell polarity such as axon guidance and lamellipodial and filopodial dynamics in migrating cells. ENAH induces the formation of F-actin rich outgrowths in fibroblasts. Acts synergistically with BAIAP2-alpha and downstream of NTN1 to promote filipodia formation. The chain is Protein enabled homolog (ENAH) from Homo sapiens (Human).